A 558-amino-acid polypeptide reads, in one-letter code: MFTIALAQLNPTIGAIAENAEKIVTAALQAQARGADLLLTPELALCGYPPKDLLLNPSFVEQLEEELQWLAEKMPPSIAILVGTVTPHHQAERQGQKKLWNSAVLIEQGQIKQWFHKCLLPTYDVFDEDRYFASAAKSEYFIYKNVKIGVTICEDLWNDEAFWGQKFYQVNPLMDLIDQGVNLVVNLSASPYSCGKHYLRESLISHSAKRFNVPLIYVNQVGGNDDLIFDGGSFAVNSQGKIIGRSPLFQEDLALLSYDLSSGELTGQKLASLPMVDTEELWQALVLGVGDYLHKCGFSKAILGLSGGIDSSLVAAIAVEALGKENVLGILMPSPYSSDHSIQDALALAKNLGMNTQTIPIGPIMATYDQALVPLFQDAPFGLAEENLQSRIRGNLLMAIANKFGHLLLSTGNKSELAVGYCTLYGDMNGGLAAIADVPKTQVFELCRWLNREQTIIPPSVLTKPPSAELKPGQVDTDSLPPYDVLDGILGRLVEKHQSPQEIINAGFEREVVLKICQLVQKSEFKRRQAAPGLKVTDRAFGSGWRMPIAQAFHPQGS.

One can recognise a CN hydrolase domain in the interval 2–262 (FTIALAQLNP…LALLSYDLSS (261 aa)). E42 (proton acceptor; for glutaminase activity) is an active-site residue. The For glutaminase activity role is filled by K117. L-glutamine is bound at residue Y123. C153 acts as the Nucleophile; for glutaminase activity in catalysis. Residues S190 and K196 each contribute to the L-glutamine site. The interval 284–558 (ALVLGVGDYL…IAQAFHPQGS (275 aa)) is ligase. Residue 304 to 311 (GLSGGIDS) coordinates ATP. Residue N387 coordinates deamido-NAD(+). T411 serves as a coordination point for ATP. Positions 416 and 526 each coordinate deamido-NAD(+).

This sequence in the C-terminal section; belongs to the NAD synthetase family.

The enzyme catalyses deamido-NAD(+) + L-glutamine + ATP + H2O = L-glutamate + AMP + diphosphate + NAD(+) + H(+). It functions in the pathway cofactor biosynthesis; NAD(+) biosynthesis; NAD(+) from deamido-NAD(+) (L-Gln route): step 1/1. In terms of biological role, catalyzes the ATP-dependent amidation of deamido-NAD to form NAD. Uses L-glutamine as a nitrogen source. This Synechocystis sp. (strain ATCC 27184 / PCC 6803 / Kazusa) protein is Glutamine-dependent NAD(+) synthetase.